A 219-amino-acid polypeptide reads, in one-letter code: Redox-sensing transcriptional repressor Rex (219 aa).

The segment at residues 17–56 is a DNA-binding region (H-T-H motif); the sequence is RYLRYVEDLLNHDIMRISSSELSQRMGYTASQVRQDFNNF. An NAD(+)-binding site is contributed by 91-96; sequence GVGNLG.

Belongs to the transcriptional regulatory Rex family. Homodimer.

It is found in the cytoplasm. Its function is as follows. Modulates transcription in response to changes in cellular NADH/NAD(+) redox state. The polypeptide is Redox-sensing transcriptional repressor Rex (Caldicellulosiruptor saccharolyticus (strain ATCC 43494 / DSM 8903 / Tp8T 6331)).